The primary structure comprises 349 residues: Anthranilate phosphoribosyltransferase (349 aa).

5-phospho-alpha-D-ribose 1-diphosphate contacts are provided by residues Gly-82, 85 to 86 (GD), 92 to 95 (NVST), 110 to 118 (KHGNRGVSS), and Ser-122. An anthranilate-binding site is contributed by Gly-82. Residue Ser-94 coordinates Mg(2+). Asn-113 is an anthranilate binding site. An anthranilate-binding site is contributed by Arg-168. 2 residues coordinate Mg(2+): Asp-227 and Glu-228.

It belongs to the anthranilate phosphoribosyltransferase family. As to quaternary structure, homodimer. Mg(2+) is required as a cofactor.

It carries out the reaction N-(5-phospho-beta-D-ribosyl)anthranilate + diphosphate = 5-phospho-alpha-D-ribose 1-diphosphate + anthranilate. Its pathway is amino-acid biosynthesis; L-tryptophan biosynthesis; L-tryptophan from chorismate: step 2/5. Its function is as follows. Catalyzes the transfer of the phosphoribosyl group of 5-phosphorylribose-1-pyrophosphate (PRPP) to anthranilate to yield N-(5'-phosphoribosyl)-anthranilate (PRA). The chain is Anthranilate phosphoribosyltransferase from Acinetobacter baumannii (strain SDF).